We begin with the raw amino-acid sequence, 288 residues long: N-glycosylase/DNA lyase (288 aa).

8-oxoguanine is bound by residues Gln-35, Ser-62, and Trp-73. Residues 134–203 form a helix-hairpin-helix region; that stretch reads NPLVLVERPS…VACASISSEM (70 aa). The Schiff-base intermediate with DNA role is filled by Lys-160. Residues Phe-164 and Pro-189 each contribute to the 8-oxoguanine site. The active site involves Asp-191. Residues Asp-238 and Trp-242 each coordinate 8-oxoguanine.

The protein belongs to the archaeal N-glycosylase/DNA lyase (AGOG) family.

It carries out the reaction 2'-deoxyribonucleotide-(2'-deoxyribose 5'-phosphate)-2'-deoxyribonucleotide-DNA = a 3'-end 2'-deoxyribonucleotide-(2,3-dehydro-2,3-deoxyribose 5'-phosphate)-DNA + a 5'-end 5'-phospho-2'-deoxyribonucleoside-DNA + H(+). In terms of biological role, DNA repair enzyme that is part of the base excision repair (BER) pathway; protects from oxidative damage by removing the major product of DNA oxidation, 8-oxoguanine (GO), from single- and double-stranded DNA substrates. This is N-glycosylase/DNA lyase from Aeropyrum pernix (strain ATCC 700893 / DSM 11879 / JCM 9820 / NBRC 100138 / K1).